The sequence spans 659 residues: Checkpoint protein RAD24 (659 aa).

The segment at 24-54 (TKWSSSRPTSPVRKARSTENDFLSKQDTSSI) is disordered. Residue 109–116 (GPSGCSKS) participates in ATP binding. Acidic residues predominate over residues 596–612 (EDEETSFNDDPIVDSDS). Positions 596 to 659 (EDEETSFNDD…SLSDSDLEIL (64 aa)) are disordered. Phosphoserine occurs at positions 652 and 654.

This sequence belongs to the rad17/RAD24 family. Component of the RAD24-RFC complex which consists of RAD14, RFC2, RFC3, RFC4 and RFC5 and associates with the checkpoint clamp DDC1:MEC3:RAD17 complex. RAD24 interacts with ECO1.

It localises to the nucleus. Participates in checkpoint pathways arrest of the cell cycle, a mechanism that allows the DNA repair pathways to act to restore the integrity of the DNA prior to DNA synthesis or separation of the replicated chromosomes. Regulates the DNA damage checkpoint pathway throughout the cell cycle, when associated with RCF5. Component of the RFC-like RAD24-RFC complex which loads the checkpoint clamp DDC1:MEC3:RAD17 complex and is involved in DNA repair pathways. During a clamp loading circle, the RFC:clamp complex binds to DNA and the recognition of the double-stranded/single-stranded junction stimulates ATP hydrolysis by RFC. The complex presumably provides bipartite ATP sites in which one subunit supplies a catalytic site for hydrolysis of ATP bound to the neighboring subunit. Dissociation of RFC from the clamp leaves the clamp encircling DNA. This is Checkpoint protein RAD24 (RAD24) from Saccharomyces cerevisiae (strain ATCC 204508 / S288c) (Baker's yeast).